Consider the following 509-residue polypeptide: 2-isopropylmalate synthase (509 aa).

The Pyruvate carboxyltransferase domain occupies 5 to 267 (IQIFDTTLRD…QTALNLEETK (263 aa)). Mn(2+)-binding residues include aspartate 14, histidine 202, histidine 204, and asparagine 238. The segment at 391 to 509 (KLETLQLQYV…AAENVEKVGN (119 aa)) is regulatory domain.

It belongs to the alpha-IPM synthase/homocitrate synthase family. LeuA type 1 subfamily. Homodimer. It depends on Mn(2+) as a cofactor.

The protein resides in the cytoplasm. It catalyses the reaction 3-methyl-2-oxobutanoate + acetyl-CoA + H2O = (2S)-2-isopropylmalate + CoA + H(+). It functions in the pathway amino-acid biosynthesis; L-leucine biosynthesis; L-leucine from 3-methyl-2-oxobutanoate: step 1/4. Functionally, catalyzes the condensation of the acetyl group of acetyl-CoA with 3-methyl-2-oxobutanoate (2-ketoisovalerate) to form 3-carboxy-3-hydroxy-4-methylpentanoate (2-isopropylmalate). This chain is 2-isopropylmalate synthase, found in Staphylococcus aureus (strain Mu3 / ATCC 700698).